The chain runs to 333 residues: Fructose-1,6-bisphosphatase class 1 (333 aa).

Positions 92, 114, 116, and 117 each coordinate Mg(2+). Residues 117 to 120 and N209 contribute to the substrate site; that span reads DGSS. Residue E279 coordinates Mg(2+).

The protein belongs to the FBPase class 1 family. Homotetramer. The cofactor is Mg(2+).

It is found in the cytoplasm. The enzyme catalyses beta-D-fructose 1,6-bisphosphate + H2O = beta-D-fructose 6-phosphate + phosphate. It participates in carbohydrate biosynthesis; gluconeogenesis. This chain is Fructose-1,6-bisphosphatase class 1, found in Alkalilimnicola ehrlichii (strain ATCC BAA-1101 / DSM 17681 / MLHE-1).